Consider the following 311-residue polypeptide: tRNA dimethylallyltransferase (311 aa).

14-21 (GPTAVGKT) is a binding site for ATP. 16–21 (TAVGKT) serves as a coordination point for substrate. The segment at 39 to 42 (DSMQ) is interaction with substrate tRNA.

Belongs to the IPP transferase family. In terms of assembly, monomer. Requires Mg(2+) as cofactor.

The enzyme catalyses adenosine(37) in tRNA + dimethylallyl diphosphate = N(6)-dimethylallyladenosine(37) in tRNA + diphosphate. In terms of biological role, catalyzes the transfer of a dimethylallyl group onto the adenine at position 37 in tRNAs that read codons beginning with uridine, leading to the formation of N6-(dimethylallyl)adenosine (i(6)A). The sequence is that of tRNA dimethylallyltransferase from Lactiplantibacillus plantarum (strain ATCC BAA-793 / NCIMB 8826 / WCFS1) (Lactobacillus plantarum).